A 547-amino-acid chain; its full sequence is Glucose-6-phosphate isomerase (547 aa).

The active-site Proton donor is the Glu-352. Catalysis depends on residues His-383 and Lys-511.

The protein belongs to the GPI family.

The protein resides in the cytoplasm. The catalysed reaction is alpha-D-glucose 6-phosphate = beta-D-fructose 6-phosphate. It functions in the pathway carbohydrate biosynthesis; gluconeogenesis. It participates in carbohydrate degradation; glycolysis; D-glyceraldehyde 3-phosphate and glycerone phosphate from D-glucose: step 2/4. Its function is as follows. Catalyzes the reversible isomerization of glucose-6-phosphate to fructose-6-phosphate. The polypeptide is Glucose-6-phosphate isomerase (Rhodospirillum rubrum (strain ATCC 11170 / ATH 1.1.1 / DSM 467 / LMG 4362 / NCIMB 8255 / S1)).